Reading from the N-terminus, the 132-residue chain is Group 2 truncated hemoglobin YjbI (132 aa).

Residues Thr45, Lys48, Tyr63, and His76 each coordinate heme.

This sequence belongs to the truncated hemoglobin family. Group II subfamily. As to quaternary structure, monomer. The cofactor is heme.

Hemoglobin-like protein that exhibits a low peroxidase activity. Its very high oxygen affinity may rule out the possibility that it is involved in oxygen transport. The polypeptide is Group 2 truncated hemoglobin YjbI (yjbI) (Bacillus subtilis (strain 168)).